The sequence spans 458 residues: Divalent metal cation transporter MntH (458 aa).

Transmembrane regions (helical) follow at residues 38-58 (GFWKTLMAFMGPGALVAVGYM), 86-106 (LIAMLLQAMAARLGIVTGMDL), 119-139 (GIFLWIVTELAIMATDIAEII), 151-171 (IPLLWGVLITAFDVLLLLLLM), 180-200 (AIVATLVAVILFVFLYEVILA), 223-243 (MLFLALGIVGATVMPHNLYLH), 275-295 (LTIAFVVNCLLLILGAAMFYG), 315-335 (IVGSIASPMLSLLFAVALLAS), 370-390 (GLSILPVIIFTVYYHGNEAQV), 395-415 (IYSQVFLSIALPVSMIPLTLF), and 436-456 (WFVTIVLTLLNIYLILQTVGL).

This sequence belongs to the NRAMP family.

The protein resides in the cell membrane. Functionally, h(+)-stimulated, divalent metal cation uptake system. The chain is Divalent metal cation transporter MntH from Latilactobacillus sakei subsp. sakei (strain 23K) (Lactobacillus sakei subsp. sakei).